Consider the following 127-residue polypeptide: Chorismate mutase AroH (127 aa).

The 119-residue stretch at 3–121 folds into the Chorismate mutase aroH-type domain; sequence IRGIRGATTV…VVVLRPDLSL (119 aa). Prephenate contacts are provided by residues Arg-7, 74–78, Arg-90, and Tyr-108; that span reads TCMQE.

In terms of assembly, homotrimer.

The protein localises to the cytoplasm. It catalyses the reaction chorismate = prephenate. It functions in the pathway metabolic intermediate biosynthesis; prephenate biosynthesis; prephenate from chorismate: step 1/1. Its function is as follows. Catalyzes the Claisen rearrangement of chorismate to prephenate. Probably involved in the aromatic amino acid biosynthesis. The sequence is that of Chorismate mutase AroH from Bacillus subtilis (strain 168).